A 699-amino-acid chain; its full sequence is Mannan-binding lectin serine protease 1 (699 aa).

An N-terminal signal peptide occupies residues 1–19; that stretch reads MRWLLLYYALCFSLSKASA. A CUB 1 domain is found at 20–138; it reads HTVELNNMFG…TGFDAHYMAV (119 aa). Residues 20–184 are homodimerization; sequence HTVELNNMFG…HTDNRTCRVE (165 aa). An interaction with MBL2 region spans residues 20 to 184; sequence HTVELNNMFG…HTDNRTCRVE (165 aa). Residues 20–278 are interaction with FCN2; it reads HTVELNNMFG…STQSHSVLIL (259 aa). Residue Asn-49 is glycosylated (N-linked (GlcNAc...) asparagine). Residues Glu-68, Asp-76, Asp-121, Ser-123, Asp-139, Val-140, and Glu-142 each contribute to the Ca(2+) site. Cys-73 and Cys-91 are disulfide-bonded. In terms of domain architecture, EGF-like; calcium-binding spans 139 to 182; it reads DVDECKEREDEELSCDHYCHNYIGGYYCSCRFGYILHTDNRTCR. Disulfide bonds link Cys-143–Cys-157, Cys-153–Cys-166, Cys-168–Cys-181, and Cys-185–Cys-212. Ca(2+) is bound by residues Asn-159, Tyr-160, and Gly-163. Asn-159 is subject to (3R)-3-hydroxyasparagine. N-linked (GlcNAc...) (complex) asparagine glycosylation is present at Asn-178. Residues 185 to 297 form the CUB 2 domain; that stretch reads CSDNLFTQRT…RGWRLSYRAA (113 aa). Glu-235, Asp-245, Asp-282, and Ser-284 together coordinate Ca(2+). A disulfide bridge links Cys-242 with Cys-260. Sushi domains are found at residues 299–364 and 365–434; these read NECP…TCKI and VDCR…TCLP. 6 disulfide bridges follow: Cys-301–Cys-349, Cys-329–Cys-362, Cys-367–Cys-414, Cys-397–Cys-432, Cys-436–Cys-572, and Cys-475–Cys-491. Residue Asn-385 is glycosylated (N-linked (GlcNAc...) (complex) asparagine). Asn-407 carries an N-linked (GlcNAc...) asparagine glycan. The region spanning 449-696 is the Peptidase S1 domain; that stretch reads IFNGRPAQKG…NKDWIQRVTG (248 aa). His-490 functions as the Charge relay system in the catalytic mechanism. N-linked (GlcNAc) asparagine glycosylation is present at Leu-533. Asp-552 (charge relay system) is an active-site residue. An N-linked (GlcNAc) asparagine glycan is attached at Glu-599. Cystine bridges form between Cys-614–Cys-631 and Cys-642–Cys-672. Ser-646 functions as the Charge relay system in the catalytic mechanism.

Belongs to the peptidase S1 family. Homodimer. Interacts with the oligomeric lectins MBL2, FCN2 and FCN3; triggers the lectin pathway of complement through activation of C3. Interacts with SERPING1. Interacts with COLEC11; probably triggers the lectin pathway of complement. The iron and 2-oxoglutarate dependent 3-hydroxylation of aspartate and asparagine is (R) stereospecific within EGF domains. Post-translationally, N-glycosylated. Some N-linked glycan are of the complex-type. In terms of processing, autoproteolytic processing of the proenzyme produces the active enzyme composed on the heavy and the light chain held together by a disulfide bond. Isoform 1 but not isoform 2 is activated through autoproteolytic processing. In terms of tissue distribution, protein of the plasma which is primarily expressed by liver.

The protein resides in the secreted. Inhibited by SERPING1 and A2M. Functions in the lectin pathway of complement, which performs a key role in innate immunity by recognizing pathogens through patterns of sugar moieties and neutralizing them. The lectin pathway is triggered upon binding of mannan-binding lectin (MBL) and ficolins to sugar moieties which leads to activation of the associated proteases MASP1 and MASP2. Functions as an endopeptidase and may activate MASP2 or C2 or directly activate C3 the key component of complement reaction. Isoform 2 may have an inhibitory effect on the activation of the lectin pathway of complement or may cleave IGFBP5. Also plays a role in development. This Homo sapiens (Human) protein is Mannan-binding lectin serine protease 1 (MASP1).